The sequence spans 359 residues: 3-dehydroquinate synthase (359 aa).

NAD(+) contacts are provided by residues 72 to 77, 106 to 110, 130 to 131, Lys-143, and Lys-152; these read DGEHYK, GVIGD, and TT. Glu-185, His-248, and His-265 together coordinate Zn(2+).

The protein belongs to the sugar phosphate cyclases superfamily. Dehydroquinate synthase family. Co(2+) serves as cofactor. Zn(2+) is required as a cofactor. Requires NAD(+) as cofactor.

It is found in the cytoplasm. It catalyses the reaction 7-phospho-2-dehydro-3-deoxy-D-arabino-heptonate = 3-dehydroquinate + phosphate. It participates in metabolic intermediate biosynthesis; chorismate biosynthesis; chorismate from D-erythrose 4-phosphate and phosphoenolpyruvate: step 2/7. Its function is as follows. Catalyzes the conversion of 3-deoxy-D-arabino-heptulosonate 7-phosphate (DAHP) to dehydroquinate (DHQ). This chain is 3-dehydroquinate synthase, found in Thermodesulfovibrio yellowstonii (strain ATCC 51303 / DSM 11347 / YP87).